The primary structure comprises 168 residues: NADH-quinone oxidoreductase subunit I (168 aa).

2 4Fe-4S ferredoxin-type domains span residues 58–88 and 99–128; these read LRTYKNGEERCIACKLCEAICPAQAITIEAQ and VRYDIDMTKCIYCGFCQEACPVDAIVEGPN. The [4Fe-4S] cluster site is built by cysteine 68, cysteine 71, cysteine 74, cysteine 78, cysteine 108, cysteine 111, cysteine 114, and cysteine 118.

Belongs to the complex I 23 kDa subunit family. NDH-1 is composed of 14 different subunits. Subunits NuoA, H, J, K, L, M, N constitute the membrane sector of the complex. It depends on [4Fe-4S] cluster as a cofactor.

The protein resides in the cell inner membrane. It carries out the reaction a quinone + NADH + 5 H(+)(in) = a quinol + NAD(+) + 4 H(+)(out). Functionally, NDH-1 shuttles electrons from NADH, via FMN and iron-sulfur (Fe-S) centers, to quinones in the respiratory chain. The immediate electron acceptor for the enzyme in this species is believed to be ubiquinone. Couples the redox reaction to proton translocation (for every two electrons transferred, four hydrogen ions are translocated across the cytoplasmic membrane), and thus conserves the redox energy in a proton gradient. This chain is NADH-quinone oxidoreductase subunit I, found in Ehrlichia ruminantium (strain Gardel).